Consider the following 709-residue polypeptide: Polyribonucleotide nucleotidyltransferase (709 aa).

2 residues coordinate Mg(2+): aspartate 491 and aspartate 497. One can recognise a KH domain in the interval proline 557–isoleucine 617. The S1 motif domain maps to glycine 641–glutamate 709.

This sequence belongs to the polyribonucleotide nucleotidyltransferase family. It depends on Mg(2+) as a cofactor.

It localises to the cytoplasm. The enzyme catalyses RNA(n+1) + phosphate = RNA(n) + a ribonucleoside 5'-diphosphate. Its function is as follows. Involved in mRNA degradation. Catalyzes the phosphorolysis of single-stranded polyribonucleotides processively in the 3'- to 5'-direction. In Helicobacter hepaticus (strain ATCC 51449 / 3B1), this protein is Polyribonucleotide nucleotidyltransferase.